The primary structure comprises 194 residues: Homing endonuclease I-DmoI (194 aa).

The DOD-type homing endonuclease domain maps to 14 to 147 (LLGLIIGDGG…VSRWLNNLGV (134 aa)). Residues Asp21 and Glu117 contribute to the active site.

A divalent metal cation serves as cofactor.

Its function is as follows. Endonuclease involved in intron homing. Recognizes DNA in the 23S rRNA gene intron (minimally 5'-CCGGGTAAGTTCCGG-3'), cutting after A-8 on the top and C-11 on the bottom strand. Has a slow turnover rate, cuts the coding strand with a slight preference over the non-coding strand. The sequence is that of Homing endonuclease I-DmoI from Desulfurococcus mucosus (Desulfurococcus mobilis).